The chain runs to 347 residues: uncharacterized protein (347 aa).

This is an uncharacterized protein from Sinorhizobium fredii (strain NBRC 101917 / NGR234).